The sequence spans 1010 residues: MPEYQINGITVNFPFEPYQVQRDYMSRVIECLQNSTNGVLESPTGTGKTLSLLCSSLAWVLHKKAQVQANMRTNITDLKEFEMVQRKKLGGDGGSGMEELLDKLHDGCGPEGAKWGVPKIVYASRTHSQLTQVMQEMKNTSYSFMKGVILGSRDQLCIHPEVSKEEGNSTKTNLCKAKVQSRTCSFYSRVESCKERPEVVSNVIMDIEDLVKVGTKVRACPFFLSKELIESADILFMPYNYLLDPKARKANNLEISNTIIILDEAHNVEKMCEESASMQIRSTDIALCIDDVTSIMKVMDHSVAIPEDDETKKDFTIDDLALLKEMLLQLEKTVDSIPVMFSQGGNTFPGTYIFEIFEKANIKEGNYHIIAQLLENIIQYIATITEKNNFVRRGGGLQILAEALSIIFAGSGPEYRASIDKCYKVHIEIEEQKKTRGNVKQADGWTATKQLVPSVKANAKVVSFWCFNPGFGMRQLLGRNARSIILTSGTLAPLKPLISELDIPIAVRLENPHIIDGSQVCVKIVGQGPDKESLNSSYGNRDNPKYISSLGRTILSFCPIIPGGLLVFFPSYPLLNKCQEAWQETGIWAQISRTKPIFVEPRGKDQFLNTMSEYYQKINDPDGKGAVFMAVCRGKVSEGLDFADMNGRAVIITGLPFPPLKDARVILKKKYLQEVRTRENEIISGDEWYSLEAARAVNQAIGRVIRHKNDYGAILLCDNRFHNHRQKSQLSSWIQKHLNTNQHQNFGPIIGELSRFFRNAEKILPQSKLSRNIVTLVQEPTPLIECNIPGALIVNRDTKRKLDDIRNNFVQIENSNQVTSTFRISDYEQAPSQSASNEPKNFLSRLNTQVHSIDFNDMTTYSMPSSSQGALVGIHKRERSTGSDNSIFSQTQTATQKKRKVVLIPQQVINLTSDDEDPGRTGDDPTRQAPEDRVELIKVIKTSIPLAKYQAFLSTLTNYNKDRNFDRLMEGLLVAFDRPELYYLLRAMRRFVKGDHEARFDAKIKEVCGR.

Residues 7-333 form the Helicase ATP-binding domain; the sequence is NGITVNFPFE…KEMLLQLEKT (327 aa). Position 42 to 49 (42 to 49) interacts with ATP; sequence SPTGTGKT. [4Fe-4S] cluster-binding residues include Cys157, Cys175, Cys184, and Cys220. The short motif at 263–266 is the DEAH box element; the sequence is DEAH. The disordered stretch occupies residues 912 to 931; sequence TSDDEDPGRTGDDPTRQAPE. Residues 918 to 931 are compositionally biased toward basic and acidic residues; sequence PGRTGDDPTRQAPE.

It belongs to the helicase family. RAD3/XPD subfamily.

Its subcellular location is the nucleus. It carries out the reaction ATP + H2O = ADP + phosphate + H(+). In terms of biological role, a probable ATP-dependent DNA helicase implicated in DNA repair and the maintenance of genomic stability. Acts as an anti-recombinase to counteract toxic recombination and limit crossover during meiosis. Regulates meiotic recombination and crossover homeostasis by physically dissociating strand invasion events and thereby promotes noncrossover repair by meiotic synthesis dependent strand annealing (SDSA) as well as disassembly of D loop recombination intermediates. This chain is Regulator of telomere elongation helicase 1 homolog, found in Aedes aegypti (Yellowfever mosquito).